Reading from the N-terminus, the 95-residue chain is MEKIKYGFGEIEAAASDIQSTSGRINSLLEDLKAHIRPMAAAWEGESAQAYNEAQQQWDSSAAELNTILSTISNTVRQGNDRMSEVNRMAAASWS.

It belongs to the WXG100 family. ESAT-6 subfamily. As to quaternary structure, forms a tight 1:1 complex with EsxB.

The sequence is that of ESAT-6-like protein EsxA from Corynebacterium diphtheriae (strain ATCC 700971 / NCTC 13129 / Biotype gravis).